Here is a 176-residue protein sequence, read N- to C-terminus: V-type proton ATPase 16 kDa proteolipid subunit (176 aa).

Topologically, residues 1 to 17 are lumenal; that stretch reads MSVLLRSVTELCPVYSP. The chain crosses the membrane as a helical span at residues 18 to 38; it reads FFGSMGITASIVFTVFGGAYG. The Cytoplasmic portion of the chain corresponds to 39–62; it reads TAKSSVGISSVGVMKPEFIMRSLF. A helical transmembrane segment spans residues 63–83; the sequence is PVVFAGVIGLYGLIVCIVLFI. Over 84-98 the chain is Lumenal; sequence NVNKSEYSLNRAFLD. Residues 99–119 traverse the membrane as a helical segment; that stretch reads LGAGLTCGLCGLASGMSIGIS. At 120-136 the chain is on the cytoplasmic side; the sequence is GDCGVRGAAQQPKLFVS. The chain crosses the membrane as a helical span at residues 137–157; that stretch reads MLICLIFSEALALYGFIVALI. At 158 to 176 the chain is on the lumenal side; that stretch reads MAATGDNSCVATASTSSSS.

It belongs to the V-ATPase proteolipid subunit family. V-ATPase is a heteromultimeric enzyme composed of a peripheral catalytic V1 complex (main components: subunits A, B, C, D, E, and F) attached to an integral membrane V0 proton pore complex (main component: the proteolipid protein; which is present as a hexamer that forms the proton-conducting pore).

It localises to the vacuole membrane. In terms of biological role, proton-conducting pore forming subunit of the membrane integral V0 complex of vacuolar ATPase. V-ATPase is responsible for acidifying a variety of intracellular compartments in eukaryotic cells. The protein is V-type proton ATPase 16 kDa proteolipid subunit (VMA3) of Entamoeba dispar.